The primary structure comprises 638 residues: Guanylate-binding protein 7 (638 aa).

The GTPase domain (Globular) stretch occupies residues 1 to 310; the sequence is MASEIHMPGP…DAINSGATPC (310 aa). A GB1/RHD3-type G domain is found at 35–277; it reads TQPVVVVAIV…FCSYIFTHAK (243 aa). GTP is bound by residues 45-52, 67-69, and 97-101; these read GLYRTGKS, LGC, and DTEGL. Residues 311-638 form an interaction with the CYBA-CYBB complex region; it reads LENAMAVLAQ…LRNPGKKIIS (328 aa). Positions 590–638 are C-terminal tail; required for its localization to cytoplasmic vesicle; that stretch reads PSVFSQILDVAGSIFIAALPGAAKLVDLGMKILSSLCNRLRNPGKKIIS.

Belongs to the TRAFAC class dynamin-like GTPase superfamily. GB1/RHD3 GTPase family. GB1 subfamily. Monomer and dimer. Interacts with CYBA, CYBA-CYBB complex and ATG4B. Interacts (via GB1/RHD3-type G domain) with NCF2 and NCF2-NCF4 complex.

It localises to the cytoplasmic vesicle membrane. The catalysed reaction is GTP + H2O = GDP + phosphate + H(+). It catalyses the reaction GDP + H2O = GMP + phosphate + H(+). Interferon (IFN)-inducible GTPase that plays important roles in innate immunity against a diverse range of bacterial, viral and protozoan pathogens. Hydrolyzes GTP to GMP in two consecutive cleavage reactions and predominantly uses GTP and not GDP or GMP as the substrate. Following infection, recruited to the pathogen-containing vacuoles or vacuole-escaped bacteria and acts as a positive regulator of inflammasome assembly by promoting the release of inflammasome ligands from bacteria. Acts by promoting lysis of pathogen-containing vacuoles, releasing pathogens into the cytosol. Following pathogen release in the cytosol, promotes recruitment of proteins that mediate bacterial cytolysis: this liberates ligands that are detected by inflammasomes, such as lipopolysaccharide (LPS) that activates the non-canonical CASP4/CASP11 inflammasome or double-stranded DNA (dsDNA) that activates the AIM2 inflammasome. Also promotes IFN-gamma-mediated host defense against bacterial infections by regulating oxidative responses and bacteriolytic peptide generation. May help to assemble NADPH oxidase on phagosomal membranes by acting as a bridging protein between NADPH oxidase cytosolic subunits NCF2-NCF4 and the membrane subunits CYBA-CYBB. Participates along with GBP1 in trafficking monoubiquinated protein cargo to autolysosomes for generating ubiquitin-derived antimicrobial peptides. Facilitates influenza A virus replication by inhibiting the activation of NF-kappaB and JAK-STAT signaling pathways and the expression of type I, type III interferons and pro-inflammatory cytokines. Confers protection to several pathogens, including the bacterial pathogens Listeria monocytogenes and Mycobacterium bovis BCG as well as the protozoan pathogen Toxoplasma gondii. Required for disruption of the parasitophorous vacuole formed following T.gondii infection and subsequent killing of the parasite. This is Guanylate-binding protein 7 (GBP7) from Homo sapiens (Human).